Consider the following 87-residue polypeptide: Small ribosomal subunit protein bS20 (87 aa).

The interval 1 to 27 (MANIKSAKKRALQSEKRRQHNASRRSM) is disordered.

This sequence belongs to the bacterial ribosomal protein bS20 family.

Functionally, binds directly to 16S ribosomal RNA. The polypeptide is Small ribosomal subunit protein bS20 (Aeromonas hydrophila subsp. hydrophila (strain ATCC 7966 / DSM 30187 / BCRC 13018 / CCUG 14551 / JCM 1027 / KCTC 2358 / NCIMB 9240 / NCTC 8049)).